Consider the following 409-residue polypeptide: Putative competence-damage inducible protein (409 aa).

The protein belongs to the CinA family.

This chain is Putative competence-damage inducible protein, found in Clostridium botulinum (strain 657 / Type Ba4).